A 529-amino-acid chain; its full sequence is UDP-glucuronosyltransferase 2B9 (529 aa).

An N-terminal signal peptide occupies residues 1 to 21; that stretch reads MSVKWTSVILLIQLSFYFSSG. Asn-67, Asn-68, and Asn-88 each carry an N-linked (GlcNAc...) asparagine glycan. A helical membrane pass occupies residues 494-514; that stretch reads IGFLLACVATVIFVIMKCCLF.

This sequence belongs to the UDP-glycosyltransferase family.

It localises to the microsome membrane. Its subcellular location is the endoplasmic reticulum membrane. The catalysed reaction is glucuronate acceptor + UDP-alpha-D-glucuronate = acceptor beta-D-glucuronoside + UDP + H(+). UDPGT is of major importance in the conjugation and subsequent elimination of potentially toxic xenobiotics and endogenous compounds. This isozyme is active on C18, C19, and C21 steroids, bile acids, and several xenobiotics including eugenol, 1-naphthol, and p-nitrophenol. This is UDP-glucuronosyltransferase 2B9 (UGT2B9) from Macaca fascicularis (Crab-eating macaque).